The sequence spans 359 residues: Acetoin catabolism protein X (359 aa).

It is found in the cell membrane. The protein operates within ketone degradation; acetoin degradation. Essential for acetoin catabolism. This Cupriavidus necator (strain ATCC 17699 / DSM 428 / KCTC 22496 / NCIMB 10442 / H16 / Stanier 337) (Ralstonia eutropha) protein is Acetoin catabolism protein X (acoX).